A 211-amino-acid chain; its full sequence is Large ribosomal subunit protein eL13 (211 aa).

Lys16 carries the N6-acetyllysine modification. Phosphoserine occurs at positions 77 and 106. Glycyl lysine isopeptide (Lys-Gly) (interchain with G-Cter in SUMO2) cross-links involve residues Lys123 and Lys145. Residue Lys174 forms a Glycyl lysine isopeptide (Lys-Gly) (interchain with G-Cter in SUMO1); alternate linkage. Residues Lys174 and Lys177 each participate in a glycyl lysine isopeptide (Lys-Gly) (interchain with G-Cter in SUMO2); alternate cross-link. Position 177 is an N6-acetyllysine; alternate (Lys177).

This sequence belongs to the eukaryotic ribosomal protein eL13 family. In terms of assembly, component of the 60S large ribosomal subunit (LSU).

It localises to the cytoplasm. In terms of biological role, component of the ribosome, a large ribonucleoprotein complex responsible for the synthesis of proteins in the cell. The small ribosomal subunit (SSU) binds messenger RNAs (mRNAs) and translates the encoded message by selecting cognate aminoacyl-transfer RNA (tRNA) molecules. The large subunit (LSU) contains the ribosomal catalytic site termed the peptidyl transferase center (PTC), which catalyzes the formation of peptide bonds, thereby polymerizing the amino acids delivered by tRNAs into a polypeptide chain. The nascent polypeptides leave the ribosome through a tunnel in the LSU and interact with protein factors that function in enzymatic processing, targeting, and the membrane insertion of nascent chains at the exit of the ribosomal tunnel. As part of the LSU, it is probably required for its formation and the maturation of rRNAs. Plays a role in bone development. This is Large ribosomal subunit protein eL13 (RPL13) from Oryctolagus cuniculus (Rabbit).